The chain runs to 298 residues: Glycine--tRNA ligase alpha subunit (298 aa).

This sequence belongs to the class-II aminoacyl-tRNA synthetase family. As to quaternary structure, tetramer of two alpha and two beta subunits.

The protein resides in the cytoplasm. It catalyses the reaction tRNA(Gly) + glycine + ATP = glycyl-tRNA(Gly) + AMP + diphosphate. The protein is Glycine--tRNA ligase alpha subunit of Helicobacter pylori (strain G27).